The sequence spans 256 residues: uncharacterized protein (256 aa).

Residues 16-83 (VRLQKILSRA…DSLVYLALNK (68 aa)) form the S4 RNA-binding domain. Asp-121 (nucleophile) is an active-site residue.

It belongs to the pseudouridine synthase RsuA family.

It carries out the reaction a uridine in RNA = a pseudouridine in RNA. This is an uncharacterized protein from Mycobacterium leprae (strain TN).